Here is a 240-residue protein sequence, read N- to C-terminus: MGKRLISQNRGRGTPKYRSPTHKRKGAVKYRSYDEMEKDGKILGTVIDILHDPGRSAPVAKVKFANDEERLVLIPEGIQVGEEIECGISAEIKPGNVLPLGEIPEGIPVYNIETIPGDGGKLVRSGGCYAHVISHDVGKTIVRLPSGFSKVLNPACRATVGVVAGGGRKEKPFVKAGKKYHSLSAKAVAWPKVRGVAMNAVDHPYGGGRHQHIGKPSSVSRHTSPGRKVGHIASRRTGKR.

The span at 1 to 11 shows a compositional bias: polar residues; that stretch reads MGKRLISQNRG. Disordered stretches follow at residues 1–25 and 207–240; these read MGKR…HKRK and GGRH…TGKR. Composition is skewed to basic residues over residues 13-25 and 224-240; these read GTPK…HKRK and SPGR…TGKR.

The protein belongs to the universal ribosomal protein uL2 family. Part of the 50S ribosomal subunit. Forms a bridge to the 30S subunit in the 70S ribosome.

One of the primary rRNA binding proteins. Required for association of the 30S and 50S subunits to form the 70S ribosome, for tRNA binding and peptide bond formation. It has been suggested to have peptidyltransferase activity; this is somewhat controversial. Makes several contacts with the 16S rRNA in the 70S ribosome. This chain is Large ribosomal subunit protein uL2, found in Methanococcus maripaludis (strain DSM 14266 / JCM 13030 / NBRC 101832 / S2 / LL).